Here is a 157-residue protein sequence, read N- to C-terminus: RNA-binding protein 3 (157 aa).

An RRM domain is found at 6–84 (GKLFVGGLNF…RQIRVDHAGK (79 aa)). Omega-N-methylarginine is present on arginine 47. The interval 81–157 (HAGKSARGTR…GGNYRDNYDN (77 aa)) is disordered. Arginine 105 bears the Asymmetric dimethylarginine; alternate mark. Arginine 105 is modified (dimethylated arginine; in A2780 ovarian carcinoma cell line). Arginine 105 is subject to Omega-N-methylarginine; alternate. Gly residues predominate over residues 105 to 114 (RGGGDQGYGS). An omega-N-methylarginine mark is found at arginine 121 and arginine 131. Serine 147 bears the Phosphoserine mark. Residue tyrosine 155 is modified to Phosphotyrosine.

In terms of assembly, interacts with RPL4. Associates with the 60S ribosomal subunits in an RNA-independent manner. Associates with ribosomes. Post-translationally, arg-105 is dimethylated, probably to asymmetric dimethylarginine. In terms of processing, phosphorylated.

Its subcellular location is the nucleus. It is found in the cytoplasm. It localises to the cell projection. The protein localises to the dendrite. In terms of biological role, cold-inducible mRNA binding protein that enhances global protein synthesis at both physiological and mild hypothermic temperatures. Reduces the relative abundance of microRNAs, when overexpressed. Enhances phosphorylation of translation initiation factors and active polysome formation. In Homo sapiens (Human), this protein is RNA-binding protein 3 (RBM3).